Consider the following 128-residue polypeptide: Small ribosomal subunit protein uS9 (128 aa).

Positions Arg97–Lys113 are enriched in basic and acidic residues. Positions Arg97–Arg128 are disordered. Basic residues predominate over residues Pro114–Arg128.

Belongs to the universal ribosomal protein uS9 family.

The polypeptide is Small ribosomal subunit protein uS9 (Phocaeicola vulgatus (strain ATCC 8482 / DSM 1447 / JCM 5826 / CCUG 4940 / NBRC 14291 / NCTC 11154) (Bacteroides vulgatus)).